The sequence spans 322 residues: tRNA uridine(34) hydroxylase (322 aa).

One can recognise a Rhodanese domain in the interval 125 to 219 (QDPDTIVIDA…YGKDPEVKGQ (95 aa)). Cys179 (cysteine persulfide intermediate) is an active-site residue.

It belongs to the TrhO family.

The catalysed reaction is uridine(34) in tRNA + AH2 + O2 = 5-hydroxyuridine(34) in tRNA + A + H2O. In terms of biological role, catalyzes oxygen-dependent 5-hydroxyuridine (ho5U) modification at position 34 in tRNAs. The chain is tRNA uridine(34) hydroxylase from Bacillus velezensis (strain DSM 23117 / BGSC 10A6 / LMG 26770 / FZB42) (Bacillus amyloliquefaciens subsp. plantarum).